A 397-amino-acid polypeptide reads, in one-letter code: Enoyl-[acyl-carrier-protein] reductase [NADH] (397 aa).

Residues 48 to 53 (GASTGY), 74 to 75 (FE), 111 to 112 (DA), and 139 to 140 (LA) each bind NAD(+). Position 224 (Tyr-224) interacts with substrate. Tyr-234 (proton donor) is an active-site residue. NAD(+) contacts are provided by residues Lys-243 and 272–274 (VVT).

Belongs to the TER reductase family. As to quaternary structure, monomer.

The catalysed reaction is a 2,3-saturated acyl-[ACP] + NAD(+) = a (2E)-enoyl-[ACP] + NADH + H(+). It functions in the pathway lipid metabolism; fatty acid biosynthesis. Functionally, involved in the final reduction of the elongation cycle of fatty acid synthesis (FAS II). Catalyzes the reduction of a carbon-carbon double bond in an enoyl moiety that is covalently linked to an acyl carrier protein (ACP). The sequence is that of Enoyl-[acyl-carrier-protein] reductase [NADH] from Pseudomonas fluorescens (strain SBW25).